A 437-amino-acid chain; its full sequence is Nickel-cobalt-cadmium resistance protein NccC (437 aa).

Residues 1-48 (MGAVLKAEANIFRSHPFRPMNQATPKKLRSAPCIGVALLLMATGSIQA) form the signal peptide.

The protein belongs to the outer membrane factor (OMF) (TC 1.B.17) family.

Component of the NCC cation-efflux system that confers resistance to nickel, cobalt and cadmium. This is Nickel-cobalt-cadmium resistance protein NccC (nccC) from Alcaligenes xylosoxydans xylosoxydans (Achromobacter xylosoxidans).